A 37-amino-acid polypeptide reads, in one-letter code: Large ribosomal subunit protein bL36 (37 aa).

Belongs to the bacterial ribosomal protein bL36 family.

This Nocardioides sp. (strain ATCC BAA-499 / JS614) protein is Large ribosomal subunit protein bL36.